A 171-amino-acid polypeptide reads, in one-letter code: Ribosome maturation factor RimM (171 aa).

Residues 96–170 enclose the PRC barrel domain; that stretch reads AEGEYYYHEI…LVTIHVTEGL (75 aa).

It belongs to the RimM family. In terms of assembly, binds ribosomal protein uS19.

The protein resides in the cytoplasm. An accessory protein needed during the final step in the assembly of 30S ribosomal subunit, possibly for assembly of the head region. Essential for efficient processing of 16S rRNA. May be needed both before and after RbfA during the maturation of 16S rRNA. It has affinity for free ribosomal 30S subunits but not for 70S ribosomes. The sequence is that of Ribosome maturation factor RimM from Bacillus anthracis (strain A0248).